Consider the following 116-residue polypeptide: MAAEGPVAKRLISVILRYNYGMNPLGSLSSAKKRGHVSKIESLPGLSSRANLRRRTTRCRPERRRFYSGTVNRNARSAGAASRSTSSVKRPLESKKRNARPETEKWCASYSAGNRR.

The interval 64 to 116 is disordered; sequence RRFYSGTVNRNARSAGAASRSTSSVKRPLESKKRNARPETEKWCASYSAGNRR. Residues 73–87 are compositionally biased toward low complexity; it reads RNARSAGAASRSTSS. Residues 90–105 show a composition bias toward basic and acidic residues; that stretch reads RPLESKKRNARPETEK.

This is an uncharacterized protein from Saccharomyces cerevisiae (strain ATCC 204508 / S288c) (Baker's yeast).